Here is a 629-residue protein sequence, read N- to C-terminus: tRNA uridine 5-carboxymethylaminomethyl modification enzyme MnmG (629 aa).

Residues 13 to 18, V125, and S180 each bind FAD; that span reads GGGHAG. NAD(+) is bound at residue 273-287; sequence GPRYCPSIEDKVMRF. Q370 is an FAD binding site.

Belongs to the MnmG family. In terms of assembly, homodimer. Heterotetramer of two MnmE and two MnmG subunits. Requires FAD as cofactor.

The protein resides in the cytoplasm. Its function is as follows. NAD-binding protein involved in the addition of a carboxymethylaminomethyl (cmnm) group at the wobble position (U34) of certain tRNAs, forming tRNA-cmnm(5)s(2)U34. In Klebsiella pneumoniae subsp. pneumoniae (strain ATCC 700721 / MGH 78578), this protein is tRNA uridine 5-carboxymethylaminomethyl modification enzyme MnmG.